The following is a 493-amino-acid chain: Glycosyltransferase alg8 (493 aa).

The next 4 membrane-spanning stretches (helical) occupy residues 13–32 (GWLF…PTSI), 47–69 (VGIW…LYIV), 380–402 (LTVA…LLWI), and 422–444 (PAYP…YVFF).

Belongs to the glycosyltransferase 2 family.

Its subcellular location is the cell membrane. Its pathway is glycan biosynthesis; alginate biosynthesis. In terms of biological role, possibly a processive enzyme that polymerizes GDP-mannuronic acid. The polypeptide is Glycosyltransferase alg8 (alg8) (Pseudomonas syringae pv. tomato (strain ATCC BAA-871 / DC3000)).